The primary structure comprises 295 residues: Protease HtpX homolog (295 aa).

2 helical membrane-spanning segments follow: residues 6–26 (IGLFLLTNILVVVTISIVTSV) and 40–60 (LSSLVIFCFLWGMGGAFVSLL). His148 contacts Zn(2+). Glu149 is a catalytic residue. His152 provides a ligand contact to Zn(2+). The next 2 helical transmembrane spans lie at 163 to 183 (LIQGIVNAFVMFFSRIISYAL) and 198 to 218 (ISNIVLSILFSILGSIVVAYF). Glu223 contributes to the Zn(2+) binding site.

The protein belongs to the peptidase M48B family. Zn(2+) serves as cofactor.

The protein localises to the cell inner membrane. This chain is Protease HtpX homolog, found in Leptospira borgpetersenii serovar Hardjo-bovis (strain JB197).